We begin with the raw amino-acid sequence, 194 residues long: Imidazoleglycerol-phosphate dehydratase (194 aa).

The protein belongs to the imidazoleglycerol-phosphate dehydratase family.

The protein resides in the cytoplasm. The enzyme catalyses D-erythro-1-(imidazol-4-yl)glycerol 3-phosphate = 3-(imidazol-4-yl)-2-oxopropyl phosphate + H2O. The protein operates within amino-acid biosynthesis; L-histidine biosynthesis; L-histidine from 5-phospho-alpha-D-ribose 1-diphosphate: step 6/9. The protein is Imidazoleglycerol-phosphate dehydratase of Listeria monocytogenes serovar 1/2a (strain ATCC BAA-679 / EGD-e).